A 74-amino-acid chain; its full sequence is Defensin (74 aa).

An N-terminal signal peptide occupies residues 1–22 (MRGLCICLVFLLVCGLVSATAA). A propeptide spanning residues 23–36 (APAESEVAHLRVRR) is cleaved from the precursor. 3 disulfide bridges follow: Cys40–Cys61, Cys47–Cys69, and Cys51–Cys71.

In terms of tissue distribution, hemolymph.

It localises to the secreted. Functionally, antibacterial activity against Gram-positive and Gram-negative bacteria. This Dermacentor variabilis (American dog tick) protein is Defensin (VSNA1).